The sequence spans 513 residues: Maturase K (513 aa).

This sequence belongs to the intron maturase 2 family. MatK subfamily.

It is found in the plastid. It localises to the chloroplast. Its function is as follows. Usually encoded in the trnK tRNA gene intron. Probably assists in splicing its own and other chloroplast group II introns. The chain is Maturase K from Arundo donax (Giant reed).